A 492-amino-acid polypeptide reads, in one-letter code: Ketol-acid reductoisomerase (NADP(+)) (492 aa).

In terms of domain architecture, KARI N-terminal Rossmann spans 15–208 (AQLGKCRFMA…GGDRAGVLES (194 aa)). Residues 45 to 48 (CGAQ), Arg-68, Arg-76, Ser-78, and 108 to 110 (DKQ) each bind NADP(+). The active site involves His-132. Residue Gly-158 coordinates NADP(+). KARI C-terminal knotted domains are found at residues 209 to 344 (SFVA…KAPP) and 345 to 485 (FEGK…MTDM). 4 residues coordinate Mg(2+): Asp-217, Glu-221, Glu-389, and Glu-393. Substrate is bound at residue Ser-414.

This sequence belongs to the ketol-acid reductoisomerase family. Mg(2+) is required as a cofactor.

The catalysed reaction is (2R)-2,3-dihydroxy-3-methylbutanoate + NADP(+) = (2S)-2-acetolactate + NADPH + H(+). The enzyme catalyses (2R,3R)-2,3-dihydroxy-3-methylpentanoate + NADP(+) = (S)-2-ethyl-2-hydroxy-3-oxobutanoate + NADPH + H(+). Its pathway is amino-acid biosynthesis; L-isoleucine biosynthesis; L-isoleucine from 2-oxobutanoate: step 2/4. It participates in amino-acid biosynthesis; L-valine biosynthesis; L-valine from pyruvate: step 2/4. In terms of biological role, involved in the biosynthesis of branched-chain amino acids (BCAA). Catalyzes an alkyl-migration followed by a ketol-acid reduction of (S)-2-acetolactate (S2AL) to yield (R)-2,3-dihydroxy-isovalerate. In the isomerase reaction, S2AL is rearranged via a Mg-dependent methyl migration to produce 3-hydroxy-3-methyl-2-ketobutyrate (HMKB). In the reductase reaction, this 2-ketoacid undergoes a metal-dependent reduction by NADPH to yield (R)-2,3-dihydroxy-isovalerate. The sequence is that of Ketol-acid reductoisomerase (NADP(+)) from Edwardsiella ictaluri (strain 93-146).